The chain runs to 84 residues: MDNNVDTITLTDEEGKETEFEVITKLDIEDKEYVVVVPKNEEVDEAIALRIDNNDDGEEVLVPVEEDEEFNMVAEAYELLFSEE.

This sequence belongs to the UPF0473 family.

This is UPF0473 protein CLD_2004 from Clostridium botulinum (strain Okra / Type B1).